Reading from the N-terminus, the 179-residue chain is Large ribosomal subunit protein uL5 (179 aa).

Belongs to the universal ribosomal protein uL5 family. As to quaternary structure, part of the 50S ribosomal subunit; part of the 5S rRNA/L5/L18/L25 subcomplex. Contacts the 5S rRNA and the P site tRNA. Forms a bridge to the 30S subunit in the 70S ribosome.

In terms of biological role, this is one of the proteins that bind and probably mediate the attachment of the 5S RNA into the large ribosomal subunit, where it forms part of the central protuberance. In the 70S ribosome it contacts protein S13 of the 30S subunit (bridge B1b), connecting the 2 subunits; this bridge is implicated in subunit movement. Contacts the P site tRNA; the 5S rRNA and some of its associated proteins might help stabilize positioning of ribosome-bound tRNAs. The polypeptide is Large ribosomal subunit protein uL5 (Desulfotalea psychrophila (strain LSv54 / DSM 12343)).